A 602-amino-acid chain; its full sequence is Protein indeterminate-domain 5, chloroplastic (602 aa).

Low complexity-rich tracts occupy residues 1 to 10 (MAASSSSAAS) and 21 to 30 (HLLPPNSSAA). Residues 1 to 50 (MAASSSSAASFFGVRQDDQSHLLPPNSSAAAPPPPPPHHQAPLPPLEAPP) constitute a chloroplast transit peptide. The disordered stretch occupies residues 1-65 (MAASSSSAAS…NQPRTPNSDA (65 aa)). Over residues 31-48 (APPPPPPHHQAPLPPLEA) the composition is skewed to pro residues. Phosphothreonine is present on T60. The residue at position 71 (S71) is a Phosphoserine. C2H2-type zinc fingers lie at residues 81–103 (FICEVCNKGFQREQNLQLHRRGH) and 122–152 (YLCPEPSCVHHDPSRALGDLTGIKKHYYRKH). The C2H2-type 2; degenerate zinc-finger motif lies at 157-180 (WKCDKCSKRYAVQSDWKAHSKTCG). Zn(2+)-binding residues include C159, C162, H175, C179, C186, C188, H201, and C205. The CCHC-type 2; atypical zinc-finger motif lies at 184-207 (YRCDCGTLFSRRDSFITHRAFCDA). Positions 194–206 (RRDSFITHRAFCD) are SHR-binding. Disordered stretches follow at residues 443–467 (KAAQMGSTSSNNNNGSNTNNNNNAS) and 537–602 (KSMS…HASF). 3 stretches are compositionally biased toward low complexity: residues 448–467 (GSTSSNNNNGSNTNNNNNAS), 546–560 (QQQQQQQQQQQQQQQ), and 570–579 (SSSDSADRSS).

In terms of assembly, binds to RGA and SCL3 competitively. As to expression, highly expressed in leaf tissues.

Its subcellular location is the plastid. The protein resides in the chloroplast. Transcription factor acting as a positive regulator of the starch synthase SS4. Controls chloroplast development and starch granule formation. Binds DNA via its zinc fingers. Recognizes and binds to SCL3 promoter sequence 5'-AGACAA-3' to promote its expression when in complex with RGA. This Arabidopsis thaliana (Mouse-ear cress) protein is Protein indeterminate-domain 5, chloroplastic.